The following is a 95-amino-acid chain: SMAD5 antisense gene protein 1 (95 aa).

Disordered stretches follow at residues 1-24 and 43-70; these read MHKQ…SSWS and SSPT…KPAN. Over residues 7–19 the composition is skewed to pro residues; it reads LLPPPATPPPPPQ.

Expressed in fetal tissues.

The sequence is that of SMAD5 antisense gene protein 1 (SMAD5-AS1) from Homo sapiens (Human).